Here is a 258-residue protein sequence, read N- to C-terminus: 3-deoxy-manno-octulosonate cytidylyltransferase (258 aa).

Belongs to the KdsB family.

It is found in the cytoplasm. The enzyme catalyses 3-deoxy-alpha-D-manno-oct-2-ulosonate + CTP = CMP-3-deoxy-beta-D-manno-octulosonate + diphosphate. Its pathway is nucleotide-sugar biosynthesis; CMP-3-deoxy-D-manno-octulosonate biosynthesis; CMP-3-deoxy-D-manno-octulosonate from 3-deoxy-D-manno-octulosonate and CTP: step 1/1. It participates in bacterial outer membrane biogenesis; lipopolysaccharide biosynthesis. Functionally, activates KDO (a required 8-carbon sugar) for incorporation into bacterial lipopolysaccharide in Gram-negative bacteria. This Nitrobacter hamburgensis (strain DSM 10229 / NCIMB 13809 / X14) protein is 3-deoxy-manno-octulosonate cytidylyltransferase.